A 2025-amino-acid polypeptide reads, in one-letter code: E3 ubiquitin-protein ligase TRIP12 (2025 aa).

The segment covering 1-10 (MSNRPNNNPG) has biased composition (polar residues). Positions 1–404 (MSNRPNNNPG…SGESESDDSE (404 aa)) are disordered. At serine 2 the chain carries N-acetylserine. The residue at position 12 (serine 12) is a Phosphoserine. Over residues 18–27 (RNTAGAQPQD) the composition is skewed to polar residues. Residues 48–70 (DPDRANTSERQKTGQVPKKDNSR) are compositionally biased toward basic and acidic residues. Phosphoserine is present on residues serine 77, serine 85, and serine 100. A compositionally biased stretch (polar residues) spans 78-88 (PDYNRTNSPSS). Positions 119 to 132 (EQQLKSAQLPSTSK) are enriched in polar residues. 2 stretches are compositionally biased toward low complexity: residues 154–166 (SSCV…SEST) and 177–215 (KLAS…ASST). Residue lysine 181 is modified to N6-acetyllysine. Positions 280–290 (PGSSKSETSKP) are enriched in polar residues. Serine 310 and serine 312 each carry phosphoserine. Polar residues predominate over residues 326–338 (QKTTGSCASTSRR). The segment covering 346–358 (GAAEARRQEKMAD) has biased composition (basic and acidic residues). Residues 360–371 (ESNQETVNSSAA) are compositionally biased toward polar residues. The segment covering 379–397 (GAAASSSVAGAVGMTTSGE) has biased composition (low complexity). The region spanning 755-869 (MLKKGNAQNT…DPELAKSFIK (115 aa)) is the WWE domain. Residues 970–1077 (ESLLTSPPKA…QSPKSSFLAS (108 aa)) form a disordered region. Serine 975 carries the post-translational modification Phosphoserine. Residues 983 to 1006 (GSGSLGSTTPASSGTATAATNASA) are compositionally biased toward low complexity. A phosphoserine mark is found at serine 1024 and serine 1030. A compositionally biased stretch (basic residues) spans 1034 to 1047 (KRKRLPKRGPRRPK). Serine 1049 carries the post-translational modification Phosphoserine. The span at 1050 to 1059 (PPRDDDKVDN) shows a compositional bias: basic and acidic residues. Positions 1062–1073 (KSPTTTQSPKSS) are enriched in low complexity. A phosphoserine mark is found at serine 1063, serine 1350, serine 1355, serine 1362, and serine 1409. Threonine 1410 carries the post-translational modification Phosphothreonine. Disordered regions lie at residues 1441-1466 (TKDC…NAKK) and 1601-1620 (TNPE…PRLD). At lysine 1458 the chain carries N6-acetyllysine. Phosphoserine is present on serine 1460. Positions 1529 to 1603 (EIIPTSEFIN…AMQRLLDTNP (75 aa)) are K-box. The HECT domain maps to 1918-2025 (PDHGYTHDSR…REGQQSFHLS (108 aa)). Residue cysteine 1992 is the Glycyl thioester intermediate of the active site.

It belongs to the UPL family. K-HECT subfamily. In terms of assembly, interacts with MYC; leading to disrupt interaction with isoform p19ARF/ARF of CDKN2A. Interacts with TRADD; leading to disrupt interaction with isoform p19ARF/ARF of CDKN2A. Interacts with SMARCC1; leading to disrupt interaction with SMARCE1.

Its subcellular location is the nucleus. It is found in the nucleoplasm. It carries out the reaction S-ubiquitinyl-[E2 ubiquitin-conjugating enzyme]-L-cysteine + [acceptor protein]-L-lysine = [E2 ubiquitin-conjugating enzyme]-L-cysteine + N(6)-ubiquitinyl-[acceptor protein]-L-lysine.. The protein operates within protein modification; protein ubiquitination. Functionally, E3 ubiquitin-protein ligase involved in ubiquitin fusion degradation (UFD) pathway and regulation of DNA repair. Part of the ubiquitin fusion degradation (UFD) pathway, a process that mediates ubiquitination of protein at their N-terminus, regardless of the presence of lysine residues in target proteins. Acts as a key regulator of DNA damage response by acting as a suppressor of RNF168, an E3 ubiquitin-protein ligase that promotes accumulation of 'Lys-63'-linked histone H2A and H2AX at DNA damage sites, thereby acting as a guard against excessive spreading of ubiquitinated chromatin at damaged chromosomes. In normal cells, mediates ubiquitination and degradation of isoform p19ARF/ARF of CDKN2A, a lysine-less tumor suppressor required for p53/TP53 activation under oncogenic stress. In cancer cells, however, isoform p19ARF/ARF and TRIP12 are located in different cell compartments, preventing isoform p19ARF/ARF ubiquitination and degradation. Does not mediate ubiquitination of isoform p16-INK4a of CDKN2A. Also catalyzes ubiquitination of NAE1 and SMARCE1, leading to their degradation. Ubiquitination and degradation of target proteins is regulated by interaction with proteins such as MYC, TRADD or SMARCC1, which disrupt the interaction between TRIP12 and target proteins. Mediates ubiquitination of ASXL1: following binding to N(6)-methyladenosine methylated DNA, ASXL1 is ubiquitinated by TRIP12, leading to its degradation and subsequent inactivation of the PR-DUB complex. This chain is E3 ubiquitin-protein ligase TRIP12 (Trip12), found in Mus musculus (Mouse).